The chain runs to 561 residues: Long-chain-fatty-acid--CoA ligase (561 aa).

An ATP-binding site is contributed by 213–224 (YTGGTTGVAKGA).

Belongs to the ATP-dependent AMP-binding enzyme family. Mg(2+) serves as cofactor.

It is found in the membrane. It carries out the reaction a long-chain fatty acid + ATP + CoA = a long-chain fatty acyl-CoA + AMP + diphosphate. The protein operates within lipid metabolism; fatty acid beta-oxidation. In terms of biological role, catalyzes the esterification, concomitant with transport, of exogenous long-chain fatty acids into metabolically active CoA thioesters for subsequent degradation or incorporation into phospholipids. This chain is Long-chain-fatty-acid--CoA ligase (fadD), found in Salmonella typhi.